We begin with the raw amino-acid sequence, 589 residues long: TAF5-like RNA polymerase II p300/CBP-associated factor-associated factor 65 kDa subunit 5L (589 aa).

WD repeat units lie at residues 266–305, 340–379, 382–421, 424–463, 466–505, and 508–547; these read NTEQLLNTAEISSDSKLLAAGFDNSCIKLWSLRSKKLKSE, GHCGPVYSTRFLADSSGLLSCSEDMSIRYWDLGSFTNTVL, GHAYPVWDVDISPFSLYFASGSHDRTARLWSFDRTYPLRI, GHLADVDCVKFHPNSNYLATGSTDKTVRLWSAQQGNSVRL, GHRGPVLSLSFSPNGKYLASAGEDQRLKLWDLASGTLFKE, and GHTDSITSLAFSPDSGLIASASMDNSVRVWDIRSTCCNTP.

Belongs to the WD repeat TAF5 family. In terms of assembly, the PCAF complex is composed of a number of TBP-associated factors (TAFS), such as TAF5, TAF5L, TAF6, TAF6L, TAF9, TAF10 and TAF12, PCAF, and also PCAF-associated factors (PAFs), such as TADA2L/ADA2, TADA3L/ADA3 and SPT3. Component of the STAGA transcription coactivator-HAT complex, at least composed of SUPT3H, GCN5L2, TAF5L, TAF6L, SUPT7L, TADA3L, TAD1L, TAF10, TAF12, TRRAP and TAF9.

It is found in the nucleus. Functions as a component of the PCAF complex. The PCAF complex is capable of efficiently acetylating histones in a nucleosomal context. The PCAF complex could be considered as the human version of the yeast SAGA complex. With TAF6L, acts as an epigenetic regulator essential for somatic reprogramming. Regulates target genes through H3K9ac deposition and MYC recruitment which trigger MYC regulatory network to orchestrate gene expression programs to control embryonic stem cell state. In Mus musculus (Mouse), this protein is TAF5-like RNA polymerase II p300/CBP-associated factor-associated factor 65 kDa subunit 5L.